We begin with the raw amino-acid sequence, 310 residues long: UDP-N-acetylenolpyruvoylglucosamine reductase (310 aa).

An FAD-binding PCMH-type domain is found at 35–199 (VGGPAQALFT…TSARFRGTPA (165 aa)). Arg179 is an active-site residue. The active-site Proton donor is Ser228. Residue Glu298 is part of the active site.

It belongs to the MurB family. FAD serves as cofactor.

It localises to the cytoplasm. It catalyses the reaction UDP-N-acetyl-alpha-D-muramate + NADP(+) = UDP-N-acetyl-3-O-(1-carboxyvinyl)-alpha-D-glucosamine + NADPH + H(+). It participates in cell wall biogenesis; peptidoglycan biosynthesis. In terms of biological role, cell wall formation. The protein is UDP-N-acetylenolpyruvoylglucosamine reductase of Rhodopseudomonas palustris (strain BisB5).